A 997-amino-acid chain; its full sequence is Sarcoplasmic/endoplasmic reticulum calcium ATPase 2 (997 aa).

Over 1-48 (MENAHTKTVEEVLGYFGVNESTGLSLEQVKKLKERWGSNELPAEEGKT) the chain is Cytoplasmic. Position 38 is a phosphoserine (S38). The helical transmembrane segment at 49 to 69 (LLELVIEQFEDLLVRILLLAA) threads the bilayer. The Lumenal portion of the chain corresponds to 70–89 (CISFVLAWFEEGEETITAFV). The chain crosses the membrane as a helical span at residues 90 to 110 (EPFVILLILVANAIVGVWQER). Over 111–253 (NAENAIEALK…QERTPLQQKL (143 aa)) the chain is Cytoplasmic. A helical membrane pass occupies residues 254 to 273 (DEFGEQLSKVISLICIAVWI). The Lumenal portion of the chain corresponds to 274 to 295 (INIGHFNDPVHGGSWIRGAIYY). Y294 and Y295 each carry 3'-nitrotyrosine. Residues 296–313 (FKIAVALAVAAIPEGLPA) traverse the membrane as a helical segment. Residues V304, A305, I307, and E309 each coordinate Ca(2+). Topologically, residues 314–756 (VITTCLALGT…EEGRAIYNNM (443 aa)) are cytoplasmic. The active-site 4-aspartylphosphate intermediate is the D351. Residues D351 and T353 each coordinate Mg(2+). T353 is a binding site for ATP. T441 carries the post-translational modification Phosphothreonine. Positions 442, 489, and 514 each coordinate ATP. S531 bears the Phosphoserine mark. Position 559 (R559) interacts with ATP. Residues 575-594 (MNLEDSANFIKYETNLTFVG) form an interaction with HAX1 region. S580 is subject to Phosphoserine. Residues T624, G625, and D626 each contribute to the ATP site. 2 positions are modified to phosphoserine: S661 and S663. Residues R677 and K683 each coordinate ATP. D702 is a Mg(2+) binding site. Residue N705 coordinates ATP. Residues 757 to 776 (KQFIRYLISSNVGEVVCIFL) traverse the membrane as a helical segment. 2 residues coordinate Ca(2+): N767 and E770. Over 777 to 786 (TAALGFPEAL) the chain is Lumenal. The helical transmembrane segment at 787–807 (IPVQLLWVNLVTDGLPATALG) threads the bilayer. The interval 787 to 807 (IPVQLLWVNLVTDGLPATALG) is interaction with PLN. An interaction with TMEM64 and PDIA3 region spans residues 788–997 (PVQLLWVNLV…RNYLEPAILE (210 aa)). Residues N795, T798, and D799 each contribute to the Ca(2+) site. At 808-827 (FNPPDLDIMNKPPRNPKEPL) the chain is on the cytoplasmic side. The chain crosses the membrane as a helical span at residues 828–850 (ISGWLFFRYLAIGCYVGAATVGA). Residues 851–896 (AAWWFIAADGGPRVSFYQLSHFLQCKDDNPDFEGVDCAIFESPYPM) lie on the Lumenal side of the membrane. C875 and C887 are joined by a disulfide. A helical transmembrane segment spans residues 897 to 916 (TMALSVLVTIEMCNALNSLS). E907 contributes to the Ca(2+) binding site. Residues 917–929 (ENQSLLRMPPWEN) are Cytoplasmic-facing. A helical membrane pass occupies residues 930–948 (IWLVGSICLSMSLHFLILY). Residues 931 to 942 (WLVGSICLSMSL) are interaction with PLN. At 949-963 (VEPLPLIFQITPLNL) the chain is on the lumenal side. Residues 964 to 984 (TQWLMVLKISLPVILMDETLK) traverse the membrane as a helical segment. Residues 985 to 997 (FVARNYLEPAILE) are Cytoplasmic-facing.

The protein belongs to the cation transport ATPase (P-type) (TC 3.A.3) family. Type IIA subfamily. As to quaternary structure, interacts with sarcolipin (SLN); the interaction inhibits ATP2A2 Ca(2+) affinity. Interacts with phospholamban (PLN); the interaction inhibits ATP2A2 Ca(2+) affinity. Interacts with myoregulin (MRLN). Interacts with ARLN and ERLN; the interactions inhibit ATP2A2 Ca(2+) affinity. Interacts with STRIT1/DWORF; the interaction results in activation of ATP2A2. Interacts with the monomeric forms of SLN, PLN, ARLN, ERLN and STRI1/DWORF. Interacts with HAX1. Interacts with S100A8 and S100A9. Interacts with SLC35G1 and STIM1. Interacts with TMEM203. Interacts with TMEM64 and PDIA3. Interacts with TMX1. Interacts with TMX2. Interacts with VMP1; VMP1 competes with PLN and SLN to prevent them from forming an inhibitory complex with ATP2A2. Interacts with ULK1. Interacts with S100A1 in a Ca(2+)-dependent manner. Interacts with TUNAR. Interacts with FLVCR2; this interaction occurs in the absence of heme and promotes ATP2A2 proteasomal degradation; this complex is dissociated upon heme binding. Interacts with FNIP1. In terms of assembly, interacts with TRAM2 (via C-terminus). Requires Mg(2+) as cofactor. Post-translationally, nitrated under oxidative stress. Nitration on the two tyrosine residues inhibits catalytic activity. Serotonylated on Gln residues by TGM2 in response to hypoxia, leading to its inactivation. Isoform 1 is expressed in the heart.

The protein resides in the endoplasmic reticulum membrane. Its subcellular location is the sarcoplasmic reticulum membrane. The enzyme catalyses Ca(2+)(in) + ATP + H2O = Ca(2+)(out) + ADP + phosphate + H(+). With respect to regulation, has different conformational states with differential Ca2+ affinity. The E1 conformational state (active form) shows high Ca(2+) affinity, while the E2 state exhibits low Ca(2+) affinity. Binding of ATP allosterically increases its affinity for subsequent binding of Ca2+. Reversibly inhibited by phospholamban (PLN) at low calcium concentrations. PLN inhibits ATP2A2 Ca(2+) affinity by disrupting its allosteric activation by ATP. Inhibited by sarcolipin (SLN) and myoregulin (MRLN). The inhibition is blocked by VMP1. Enhanced by STRIT1/DWORF; STRIT1 increases activity by displacing sarcolipin (SLN), phospholamban (PLN) and myoregulin (MRLN). Stabilizes SERCA2 in its E2 state. In terms of biological role, this magnesium-dependent enzyme catalyzes the hydrolysis of ATP coupled with the translocation of calcium from the cytosol to the sarcoplasmic reticulum lumen. Involved in autophagy in response to starvation. Upon interaction with VMP1 and activation, controls ER-isolation membrane contacts for autophagosome formation. Also modulates ER contacts with lipid droplets, mitochondria and endosomes. In coordination with FLVCR2 mediates heme-stimulated switching from mitochondrial ATP synthesis to thermogenesis. Involved in the regulation of the contraction/relaxation cycle. Acts as a regulator of TNFSF11-mediated Ca(2+) signaling pathways via its interaction with TMEM64 which is critical for the TNFSF11-induced CREB1 activation and mitochondrial ROS generation necessary for proper osteoclast generation. Association between TMEM64 and SERCA2 in the ER leads to cytosolic Ca(2+) spiking for activation of NFATC1 and production of mitochondrial ROS, thereby triggering Ca(2+) signaling cascades that promote osteoclast differentiation and activation. In Felis catus (Cat), this protein is Sarcoplasmic/endoplasmic reticulum calcium ATPase 2 (ATP2A2).